A 247-amino-acid chain; its full sequence is Sugar fermentation stimulation protein homolog (247 aa).

It belongs to the SfsA family.

In Methylorubrum populi (strain ATCC BAA-705 / NCIMB 13946 / BJ001) (Methylobacterium populi), this protein is Sugar fermentation stimulation protein homolog.